A 293-amino-acid chain; its full sequence is Putative metal ABC transporter substrate-binding protein Hpf (293 aa).

A signal peptide spans 1-22; it reads MRNSFKIMTALALGLFAMQANA. An interaction with host components region spans residues 23–48; sequence KFKVVTTFTVIQDIAQNVAGNAATVE. A divalent metal cation is bound by residues histidine 58, histidine 123, glutamate 189, and aspartate 264.

The protein belongs to the bacterial solute-binding protein 9 family. Interacts with host laminin and vitronectin. Can interact with both immobilized and soluble vitronectin.

It localises to the cell outer membrane. Its subcellular location is the cell surface. The protein localises to the periplasm. Functionally, part of an ATP-binding cassette (ABC) transport system involved in metal import. Binds a metal with high affinity and specificity and delivers it to the membrane permease for translocation into the cytoplasm. Acts as an adhesin that promotes binding of H.influenzae to host laminin and vitronectin. In addition, interaction with serum vitronectin plays an important role in bacterial serum resistance. The chain is Putative metal ABC transporter substrate-binding protein Hpf (hpf) from Haemophilus influenzae (strain NTHi 3655).